The sequence spans 245 residues: tRNA1(Val) (adenine(37)-N6)-methyltransferase (245 aa).

It belongs to the methyltransferase superfamily. tRNA (adenine-N(6)-)-methyltransferase family.

Its subcellular location is the cytoplasm. It catalyses the reaction adenosine(37) in tRNA1(Val) + S-adenosyl-L-methionine = N(6)-methyladenosine(37) in tRNA1(Val) + S-adenosyl-L-homocysteine + H(+). Specifically methylates the adenine in position 37 of tRNA(1)(Val) (anticodon cmo5UAC). The polypeptide is tRNA1(Val) (adenine(37)-N6)-methyltransferase (Escherichia coli O157:H7).